The chain runs to 67 residues: MPNNNSSNQLLVPGVQQALNQMKEEIASEFGVQLGPDASSRANGSVGGEITKRLVRQAQSQMNGYTK.

The protein belongs to the alpha/beta-type SASP family.

Its function is as follows. SASP are bound to spore DNA. They are double-stranded DNA-binding proteins that cause DNA to change to an a-like conformation. They protect the DNA backbone from chemical and enzymatic cleavage and are thus involved in dormant spore's high resistance to UV light. The polypeptide is Small, acid-soluble spore protein 2 (Su-2) (Sporosarcina ureae).